A 346-amino-acid polypeptide reads, in one-letter code: KH domain-containing, RNA-binding, signal transduction-associated protein 2 (346 aa).

The KH domain maps to 65-131; sequence LIPVQQYPKF…AKYAHLSNDL (67 aa). The disordered stretch occupies residues 175–291; the sequence is LSYLNGSDDP…SYESYDDNYS (117 aa). Over residues 195-224 the composition is skewed to low complexity; it reads LRLTSTASPRGRGSAAPPAPPGRGAAAPRG. Positions 268–287 are enriched in acidic residues; the sequence is YGYDDGYDGEYDDQSYESYD.

Belongs to the KHDRBS family.

It localises to the nucleus. Functionally, RNA-binding protein that plays a role in the regulation of alternative splicing. This is KH domain-containing, RNA-binding, signal transduction-associated protein 2 (khdrbs2) from Danio rerio (Zebrafish).